The primary structure comprises 234 residues: MLVLDDVQYTYQRELFRFELSIERGQIVSLMGPSGAGKSTLLALVAGFIHPDQGDIRVDGESIVRKEPYQRPFSMLFQEHNLFSHLSVRDNIGLGLHPGLKLTVDQKRQVEQAAQQVGVAEYLDRLPEHLSGGQRQRVALARCFVQPHPMWLLDEPFSALDPVLREEMLSLVKKLAAERGITVLMVTHHLSDAKAIASHFAFVANGKVEAVGEIDALTAEHPSKTLQAFVRAAG.

An ABC transporter domain is found at 2-230 (LVLDDVQYTY…HPSKTLQAFV (229 aa)). 32-39 (GPSGAGKS) serves as a coordination point for ATP.

It belongs to the ABC transporter superfamily. Thiamine importer (TC 3.A.1.19.1) family. The complex is composed of two ATP-binding proteins (ThiQ), two transmembrane proteins (ThiP) and a solute-binding protein (ThiB).

Its subcellular location is the cell inner membrane. It carries out the reaction thiamine(out) + ATP + H2O = thiamine(in) + ADP + phosphate + H(+). Its function is as follows. Part of the ABC transporter complex ThiBPQ involved in thiamine import. Responsible for energy coupling to the transport system. This chain is Thiamine import ATP-binding protein ThiQ, found in Vibrio parahaemolyticus serotype O3:K6 (strain RIMD 2210633).